Reading from the N-terminus, the 436-residue chain is 3-ketoacyl-CoA thiolase (436 aa).

The active-site Acyl-thioester intermediate is Cys-99. Catalysis depends on proton acceptor residues His-392 and Cys-422.

Belongs to the thiolase-like superfamily. Thiolase family. Heterotetramer of two alpha chains (FadJ) and two beta chains (FadI).

It is found in the cytoplasm. It catalyses the reaction an acyl-CoA + acetyl-CoA = a 3-oxoacyl-CoA + CoA. The protein operates within lipid metabolism; fatty acid beta-oxidation. Catalyzes the final step of fatty acid oxidation in which acetyl-CoA is released and the CoA ester of a fatty acid two carbons shorter is formed. The sequence is that of 3-ketoacyl-CoA thiolase from Escherichia coli O8 (strain IAI1).